The sequence spans 445 residues: Homoserine dehydrogenase (445 aa).

Residues Phe26, Thr28, and Val29 each contribute to the NADPH site. NAD(+)-binding residues include Val29 and Ala58. NADP(+) is bound at residue Val29. Lys119 is a binding site for NADPH. Residue Lys119 coordinates NADP(+). Na(+) contacts are provided by Glu143, Val146, Gly148, and Ile150. Residues Gly201 and Glu204 each coordinate NADP(+). L-homoserine contacts are provided by Glu204 and Asp215. Lys219 functions as the Proton donor in the catalytic mechanism. Position 321 (Gly321) interacts with NADPH. Residue Gly321 participates in NAD(+) binding. An NADP(+)-binding site is contributed by Gly321. The ACT domain occupies His368–Asp445.

Belongs to the homoserine dehydrogenase family. Requires a metal cation as cofactor.

The catalysed reaction is L-homoserine + NADP(+) = L-aspartate 4-semialdehyde + NADPH + H(+). The enzyme catalyses L-homoserine + NAD(+) = L-aspartate 4-semialdehyde + NADH + H(+). It functions in the pathway amino-acid biosynthesis; L-methionine biosynthesis via de novo pathway; L-homoserine from L-aspartate: step 3/3. It participates in amino-acid biosynthesis; L-threonine biosynthesis; L-threonine from L-aspartate: step 3/5. Feedback inhibition by threonine. Its function is as follows. Catalyzes the conversion of L-aspartate-beta-semialdehyde (L-Asa) to L-homoserine (L-Hse), the third step in the biosynthesis of threonine and methionine from aspartate. This Corynebacterium glutamicum (strain ATCC 13032 / DSM 20300 / JCM 1318 / BCRC 11384 / CCUG 27702 / LMG 3730 / NBRC 12168 / NCIMB 10025 / NRRL B-2784 / 534) protein is Homoserine dehydrogenase (hom).